The sequence spans 119 residues: Acidic phospholipase A2 CM-II (119 aa).

Cystine bridges form between Cys11–Cys71, Cys26–Cys118, Cys28–Cys44, Cys43–Cys99, Cys50–Cys92, Cys60–Cys85, and Cys78–Cys90. Ca(2+) is bound by residues Phe27, Gly29, and Gly31. His47 is a catalytic residue. Asp48 provides a ligand contact to Ca(2+). Asp93 is an active-site residue.

This sequence belongs to the phospholipase A2 family. Group I subfamily. D49 sub-subfamily. Requires Ca(2+) as cofactor. In terms of tissue distribution, expressed by the venom gland.

It is found in the secreted. The catalysed reaction is a 1,2-diacyl-sn-glycero-3-phosphocholine + H2O = a 1-acyl-sn-glycero-3-phosphocholine + a fatty acid + H(+). PLA2 catalyzes the calcium-dependent hydrolysis of the 2-acyl groups in 3-sn-phosphoglycerides. This Aspidelaps scutatus (Shield-nose snake) protein is Acidic phospholipase A2 CM-II.